Reading from the N-terminus, the 274-residue chain is Proteasome subunit beta (274 aa).

Positions 1–52 (MADPLGAAGRLPAVFMTPGTSSFADFLSRSAPHLLPGARSGLPGPVTEVAHG) are cleaved as a propeptide — removed in mature form; by autocatalysis. Thr53 functions as the Nucleophile in the catalytic mechanism.

Belongs to the peptidase T1B family. In terms of assembly, the 20S proteasome core is composed of 14 alpha and 14 beta subunits that assemble into four stacked heptameric rings, resulting in a barrel-shaped structure. The two inner rings, each composed of seven catalytic beta subunits, are sandwiched by two outer rings, each composed of seven alpha subunits. The catalytic chamber with the active sites is on the inside of the barrel. Has a gated structure, the ends of the cylinder being occluded by the N-termini of the alpha-subunits. Is capped by the proteasome-associated ATPase, ARC.

The protein resides in the cytoplasm. The enzyme catalyses Cleavage of peptide bonds with very broad specificity.. It participates in protein degradation; proteasomal Pup-dependent pathway. Its activity is regulated as follows. The formation of the proteasomal ATPase ARC-20S proteasome complex, likely via the docking of the C-termini of ARC into the intersubunit pockets in the alpha-rings, may trigger opening of the gate for substrate entry. Interconversion between the open-gate and close-gate conformations leads to a dynamic regulation of the 20S proteasome proteolysis activity. Its function is as follows. Component of the proteasome core, a large protease complex with broad specificity involved in protein degradation. This Frankia casuarinae (strain DSM 45818 / CECT 9043 / HFP020203 / CcI3) protein is Proteasome subunit beta.